A 772-amino-acid chain; its full sequence is Ribosomal protein S6 kinase alpha-4 (772 aa).

The 269-residue stretch at 33–301 (FELLKVLGTG…AQEVRNHPFF (269 aa)) folds into the Protein kinase 1 domain. ATP contacts are provided by residues 39–47 (LGTGAYGKV) and lysine 65. The Proton acceptor role is filled by aspartate 161. Serine 196 carries the post-translational modification Phosphoserine; by autocatalysis. In terms of domain architecture, AGC-kinase C-terminal spans 302–371 (QGLDWVALAA…VAPSILFDHN (70 aa)). Phosphoserine; by MAPK1, MAPK3 and MAPK14 is present on serine 343. Serine 347 carries the post-translational modification Phosphoserine. 2 positions are modified to phosphoserine; by autocatalysis: serine 360 and serine 365. Residues 411 to 674 (DLREPALGQG…LEGLRGSSWL (264 aa)) form the Protein kinase 2 domain. Residues 417-425 (LGQGSFSVC) and lysine 440 each bind ATP. The Proton acceptor role is filled by aspartate 530. Residue threonine 542 is modified to Phosphothreonine. A Phosphothreonine; by MAPK1, MAPK3 and MAPK14 modification is found at threonine 568. Phosphoserine occurs at positions 634 and 678. Disordered regions lie at residues 673 to 696 (WLQD…SSGP) and 728 to 772 (AKRR…LPPS). Threonine 687 carries the post-translational modification Phosphothreonine. The tract at residues 725–772 (APLAKRRKQKLRSATASRRGSPAPANPGRAPVASKGAPRRANGPLPPS) is required for nuclear targeting and association with MAPK14. Serine 737 carries the phosphoserine; by autocatalysis modification. Phosphoserine is present on serine 745.

This sequence belongs to the protein kinase superfamily. AGC Ser/Thr protein kinase family. S6 kinase subfamily. As to quaternary structure, forms a complex with either MAPK1/ERK2 or MAPK3/ERK1 in quiescent cells which transiently dissociates following mitogenic stimulation. Also associates with MAPK14/p38-alpha. Activated RPS6KA4 associates with and phosphorylates the NF-kappa-B p65 subunit RELA. Mg(2+) serves as cofactor. Ser-343 and Thr-568 phosphorylation is required for kinase activity. Ser-343 and Ser-196 are autophosphorylated by the C-terminal kinase domain, and their phosphorylation is essential for the catalytic activity of the N-terminal kinase domain. Phosphorylated at Ser-343, Thr-568 and Thr-687 by MAPK1/ERK2, MAPK3/ERK1 and MAPK14/p38-alpha. Autophosphorylated at Ser-737 and Ser-745 by the N-terminal kinase domain.

The protein resides in the nucleus. The enzyme catalyses L-seryl-[protein] + ATP = O-phospho-L-seryl-[protein] + ADP + H(+). The catalysed reaction is L-threonyl-[protein] + ATP = O-phospho-L-threonyl-[protein] + ADP + H(+). Activated by phosphorylation at Ser-343, Thr-568 and Thr-687 by MAPK1/ERK2, MAPK3/ERK1 and MAPK14/p38-alpha, and by further autophosphorylation of Ser-196, Ser-360 and Ser-365 by the activated C-terminal kinase domain. Serine/threonine-protein kinase that is required for the mitogen or stress-induced phosphorylation of the transcription factors CREB1 and ATF1 and for the regulation of the transcription factor RELA, and that contributes to gene activation by histone phosphorylation and functions in the regulation of inflammatory genes. Phosphorylates CREB1 and ATF1 in response to mitogenic or stress stimuli such as UV-C irradiation, epidermal growth factor (EGF) and anisomycin. Plays an essential role in the control of RELA transcriptional activity in response to TNF. Phosphorylates 'Ser-10' of histone H3 in response to mitogenics, stress stimuli and EGF, which results in the transcriptional activation of several immediate early genes, including proto-oncogenes c-fos/FOS and c-jun/JUN. May also phosphorylate 'Ser-28' of histone H3. Mediates the mitogen- and stress-induced phosphorylation of high mobility group protein 1 (HMGN1/HMG14). In lipopolysaccharide-stimulated primary macrophages, acts downstream of the Toll-like receptor TLR4 to limit the production of pro-inflammatory cytokines. Functions probably by inducing transcription of the MAP kinase phosphatase DUSP1 and the anti-inflammatory cytokine interleukin 10 (IL10), via CREB1 and ATF1 transcription factors. The chain is Ribosomal protein S6 kinase alpha-4 (RPS6KA4) from Homo sapiens (Human).